The sequence spans 201 residues: Adenylyl-sulfate kinase (201 aa).

Residue 35-42 (GLSGSGKS) participates in ATP binding. Serine 109 acts as the Phosphoserine intermediate in catalysis.

This sequence belongs to the APS kinase family.

It catalyses the reaction adenosine 5'-phosphosulfate + ATP = 3'-phosphoadenylyl sulfate + ADP + H(+). Its pathway is sulfur metabolism; hydrogen sulfide biosynthesis; sulfite from sulfate: step 2/3. Catalyzes the synthesis of activated sulfate. This Salmonella paratyphi A (strain AKU_12601) protein is Adenylyl-sulfate kinase.